Reading from the N-terminus, the 298-residue chain is Myoblast determination protein 1 homolog (298 aa).

Basic and acidic residues predominate over residues 53 to 73 (PEEHPHTRAPPREPTEEEHVR). The tract at residues 53-77 (PEEHPHTRAPPREPTEEEHVRAPSG) is disordered. Positions 100–151 (DRRKAATMRERRRLSKVNEAFETLKRCTSTNPNQRLPKVEILRNAIRYIESL) constitute a bHLH domain. Disordered regions lie at residues 170–220 (SGES…GKSS) and 242–298 (CPIL…YQVL). 2 stretches are compositionally biased toward polar residues: residues 173–183 (SDASSPRSNCS) and 257–284 (CSPQ…LPQE).

In terms of assembly, efficient DNA binding requires dimerization with another bHLH protein. Seems to form active heterodimers with ITF-2.

The protein resides in the nucleus. Functionally, acts as a transcriptional activator that promotes transcription of muscle-specific target genes and plays a role in muscle differentiation. Induces fibroblasts to differentiate into myoblasts. Interacts with and is inhibited by the twist protein. This interaction probably involves the basic domains of both proteins. This is Myoblast determination protein 1 homolog (MYOD1) from Gallus gallus (Chicken).